The sequence spans 290 residues: RIO-type serine/threonine-protein kinase Rio1 (290 aa).

In terms of domain architecture, Protein kinase spans 76-290 (TEYIGIVNSG…PIDEAMIKQL (215 aa)). ATP-binding positions include 82–90 (VNSGKEAVV) and Lys103. The Proton acceptor role is filled by Asp214. Positions 219 and 231 each coordinate Mg(2+). Asp231 functions as the 4-aspartylphosphate intermediate in the catalytic mechanism.

This sequence belongs to the protein kinase superfamily. RIO-type Ser/Thr kinase family.

The enzyme catalyses L-seryl-[protein] + ATP = O-phospho-L-seryl-[protein] + ADP + H(+). The catalysed reaction is L-threonyl-[protein] + ATP = O-phospho-L-threonyl-[protein] + ADP + H(+). It carries out the reaction ATP + H2O = ADP + phosphate + H(+). In terms of biological role, despite the protein kinase domain is proposed to act predominantly as an ATPase. The sequence is that of RIO-type serine/threonine-protein kinase Rio1 (rio1) from Methanocaldococcus jannaschii (strain ATCC 43067 / DSM 2661 / JAL-1 / JCM 10045 / NBRC 100440) (Methanococcus jannaschii).